Reading from the N-terminus, the 284-residue chain is NAD kinase (284 aa).

D71 serves as the catalytic Proton acceptor. NAD(+) contacts are provided by residues 71–72 (DG), 144–145 (ND), D174, 185–190 (TAYNLS), and Q242.

Belongs to the NAD kinase family. It depends on a divalent metal cation as a cofactor.

It localises to the cytoplasm. The catalysed reaction is NAD(+) + ATP = ADP + NADP(+) + H(+). In terms of biological role, involved in the regulation of the intracellular balance of NAD and NADP, and is a key enzyme in the biosynthesis of NADP. Catalyzes specifically the phosphorylation on 2'-hydroxyl of the adenosine moiety of NAD to yield NADP. The chain is NAD kinase from Sulfurimonas denitrificans (strain ATCC 33889 / DSM 1251) (Thiomicrospira denitrificans (strain ATCC 33889 / DSM 1251)).